An 81-amino-acid chain; its full sequence is ATP synthase subunit c, chloroplastic (81 aa).

The next 2 helical transmembrane spans lie at 3 to 23 and 57 to 77; these read PLIPAASVIAAGLAVGLASIG and LAFMEALTIYGLVVALALLFA.

It belongs to the ATPase C chain family. As to quaternary structure, F-type ATPases have 2 components, F(1) - the catalytic core - and F(0) - the membrane proton channel. F(1) has five subunits: alpha(3), beta(3), gamma(1), delta(1), epsilon(1). F(0) has four main subunits: a(1), b(1), b'(1) and c(10-14). The alpha and beta chains form an alternating ring which encloses part of the gamma chain. F(1) is attached to F(0) by a central stalk formed by the gamma and epsilon chains, while a peripheral stalk is formed by the delta, b and b' chains.

The protein localises to the plastid. It is found in the chloroplast thylakoid membrane. In terms of biological role, f(1)F(0) ATP synthase produces ATP from ADP in the presence of a proton or sodium gradient. F-type ATPases consist of two structural domains, F(1) containing the extramembraneous catalytic core and F(0) containing the membrane proton channel, linked together by a central stalk and a peripheral stalk. During catalysis, ATP synthesis in the catalytic domain of F(1) is coupled via a rotary mechanism of the central stalk subunits to proton translocation. Its function is as follows. Key component of the F(0) channel; it plays a direct role in translocation across the membrane. A homomeric c-ring of between 10-14 subunits forms the central stalk rotor element with the F(1) delta and epsilon subunits. In Cycas taitungensis (Prince sago), this protein is ATP synthase subunit c, chloroplastic.